Consider the following 65-residue polypeptide: Small ribosomal subunit protein eS17 (65 aa).

The protein belongs to the eukaryotic ribosomal protein eS17 family.

In Archaeoglobus fulgidus (strain ATCC 49558 / DSM 4304 / JCM 9628 / NBRC 100126 / VC-16), this protein is Small ribosomal subunit protein eS17.